The chain runs to 431 residues: FAD-dependent monooxygenase nodY1 (431 aa).

The signal sequence occupies residues 1–21; it reads MASTGVSVIVVGLGLAGLTTA. Residues glutamate 35 and arginine 110 each contribute to the FAD site. The active site involves arginine 188. Aspartate 313 contacts FAD.

The protein belongs to the paxM FAD-dependent monooxygenase family. FAD is required as a cofactor.

Its pathway is secondary metabolite biosynthesis. FAD-dependent monooxygenase; part of the gene cluster that mediates the biosynthesis of the indole diterpenes nodulisporic acids (NA). Nodulisporic acid A (NAA) and its chemically modified derivatives are of particular significance because of their highly potent insecticidal activity against blood-feeding arthropods and lack of observable adverse effects on mammals, in particular the tremogenicity associated with the paspaline-derived IDTs is not observed. The geranylgeranyl diphosphate (GGPP) synthase ggs1, localized outside of the cluster, is proposed to catalyze the first step in nodulisporic acid biosynthesis via conversion of farnesyl pyrophosphate and isopentyl pyrophosphate into geranylgeranyl pyrophosphate (GGPP). Condensation of indole-3-glycerol phosphate with GGPP by the prenyl transferase nodC then forms 3-geranylgeranylindole (3-GGI). Epoxidation by the FAD-dependent monooxygenase nodM leads to a single-epoxidized-GGI that is substrate of the terpene cyclase nodB for cyclization to yield emindole SB. The terminal methyl carbon, C28, of emindole SB is then oxidized by the cytochrome P450 monooxygenase nodW to produce nodulisporic acid F (NAF), the pentacyclic core of NAA. NAF is converted to nodulisporic acid E (NAE) via prenylation. This step is probably performed by one of the indole diterpene prenyltransferases nodD1 or nodD2. Several oxidation steps performed by the FAD-linked oxidoreductase nodO and one of the cytochrome P450 monooxygenase nodR, nodX or nodZ further convert NAE to nodulisporic acid D (NAD). NAD is substrate of cytochrome P450 monooxygenase nodJ to produce the precursor of nodulisporic acid C (NAC), converted to NAC by one of the indole diterpene prenyltransferases nodD1 or nodD2. The FAD-dependent monooxygenase nodY2 then oxidizes NAC to nodulisporic acid B (NAB). Finally NAB is converted to NAA by one of the cytochrome P450 monooxygenases nodR, nodX or nodZ. This chain is FAD-dependent monooxygenase nodY1, found in Hypoxylon pulicicidum.